The sequence spans 247 residues: Chaperone protein AfaB (247 aa).

The signal sequence occupies residues 1–29 (MKMRAVAVFTGMLTGVLSVAGLLSAGAYA).

The protein belongs to the periplasmic pilus chaperone family.

It is found in the periplasm. Involved in the biogenesis of the AFA-III afimbrial adhesin. The protein is Chaperone protein AfaB (afaB) of Escherichia coli.